The following is a 306-amino-acid chain: Type 3 secretion system translocon protein SctB (306 aa).

Residues 128-152 (LMIAMAVVSGIMAATSTVASAFSIA) traverse the membrane as a helical segment.

This sequence belongs to the SctB/YopD family. In terms of assembly, the core secretion machinery of the T3SS is composed of approximately 20 different proteins, including cytoplasmic components, a base, an export apparatus and a needle. This subunit is involved in the formation of a pore, called the translocon, in host membrane. Interacts with YopB/SctE and YopE. Together with YopB/SctE, forms a multimeric integral membrane complex with a mass of between 500 and 700 kDa. Interacts with its cognate chaperone SycD.

It localises to the secreted. Its subcellular location is the host membrane. Its function is as follows. Component of the type III secretion system (T3SS), also called injectisome, which is used to inject bacterial effector proteins into eukaryotic host cells. YopB/SctE and YopD/SctB are inserted into the host membrane where they form a pore and allow the translocation of effector proteins into the cytosol of target cells. Involved in pathogenesis. Essential for the establishment of Yersinia infections in a mouse model system, but not for the targeting of effector Yops. May modulate the host's immune response at a distance from the site of infection. This chain is Type 3 secretion system translocon protein SctB, found in Yersinia enterocolitica.